We begin with the raw amino-acid sequence, 219 residues long: tRNA (guanine-N(7)-)-methyltransferase (219 aa).

S-adenosyl-L-methionine contacts are provided by E51, E76, D103, and D125. The active site involves D125. Residues K129, D161, and 199–202 (TRYE) contribute to the substrate site.

This sequence belongs to the class I-like SAM-binding methyltransferase superfamily. TrmB family.

It carries out the reaction guanosine(46) in tRNA + S-adenosyl-L-methionine = N(7)-methylguanosine(46) in tRNA + S-adenosyl-L-homocysteine. The protein operates within tRNA modification; N(7)-methylguanine-tRNA biosynthesis. Its function is as follows. Catalyzes the formation of N(7)-methylguanine at position 46 (m7G46) in tRNA. This Hyphomonas neptunium (strain ATCC 15444) protein is tRNA (guanine-N(7)-)-methyltransferase.